The primary structure comprises 172 residues: Large ribosomal subunit protein uL10 (172 aa).

Belongs to the universal ribosomal protein uL10 family. Part of the ribosomal stalk of the 50S ribosomal subunit. The N-terminus interacts with L11 and the large rRNA to form the base of the stalk. The C-terminus forms an elongated spine to which L12 dimers bind in a sequential fashion forming a multimeric L10(L12)X complex.

Its function is as follows. Forms part of the ribosomal stalk, playing a central role in the interaction of the ribosome with GTP-bound translation factors. This chain is Large ribosomal subunit protein uL10, found in Brucella suis biovar 1 (strain 1330).